We begin with the raw amino-acid sequence, 81 residues long: Photosystem I iron-sulfur center (81 aa).

4Fe-4S ferredoxin-type domains are found at residues 2-31 (SHTV…MVPW) and 39-68 (IASS…IRVY). Residues cysteine 11, cysteine 14, cysteine 17, cysteine 21, cysteine 48, cysteine 51, cysteine 54, and cysteine 58 each coordinate [4Fe-4S] cluster.

The cyanobacterial PSI reaction center is composed of one copy each of PsaA,B,C,D,E,F,I,J,K,L,M and X, and forms trimeric complexes. The cofactor is [4Fe-4S] cluster.

The protein resides in the cellular thylakoid membrane. The catalysed reaction is reduced [plastocyanin] + hnu + oxidized [2Fe-2S]-[ferredoxin] = oxidized [plastocyanin] + reduced [2Fe-2S]-[ferredoxin]. Functionally, apoprotein for the two 4Fe-4S centers FA and FB of photosystem I (PSI); essential for photochemical activity. FB is the terminal electron acceptor of PSI, donating electrons to ferredoxin. The C-terminus interacts with PsaA/B/D and helps assemble the protein into the PSI complex. Required for binding of PsaD and PsaE to PSI. PSI is a plastocyanin/cytochrome c6-ferredoxin oxidoreductase, converting photonic excitation into a charge separation, which transfers an electron from the donor P700 chlorophyll pair to the spectroscopically characterized acceptors A0, A1, FX, FA and FB in turn. This is Photosystem I iron-sulfur center from Microchaete diplosiphon (Fremyella diplosiphon).